Consider the following 396-residue polypeptide: Acetate kinase (396 aa).

Asparagine 7 provides a ligand contact to Mg(2+). Lysine 14 is a binding site for ATP. Residue arginine 88 coordinates substrate. Catalysis depends on aspartate 145, which acts as the Proton donor/acceptor. ATP is bound by residues 205–209 (HLGNG), 279–281 (DFR), and 327–331 (GIGEN). Glutamate 381 provides a ligand contact to Mg(2+).

It belongs to the acetokinase family. As to quaternary structure, homodimer. Mg(2+) is required as a cofactor. Mn(2+) serves as cofactor.

It is found in the cytoplasm. It carries out the reaction acetate + ATP = acetyl phosphate + ADP. It functions in the pathway metabolic intermediate biosynthesis; acetyl-CoA biosynthesis; acetyl-CoA from acetate: step 1/2. Catalyzes the formation of acetyl phosphate from acetate and ATP. Can also catalyze the reverse reaction. This Campylobacter jejuni (strain RM1221) protein is Acetate kinase.